We begin with the raw amino-acid sequence, 231 residues long: Dephospho-CoA kinase domain-containing protein (231 aa).

The 205-residue stretch at 3–207 folds into the DPCK domain; the sequence is LVGLTGGIAS…RSMEYLPLRL (205 aa). 8 to 15 is an ATP binding site; it reads GGIASGKS.

It belongs to the CoaE family.

In Mus musculus (Mouse), this protein is Dephospho-CoA kinase domain-containing protein (Dcakd).